The chain runs to 150 residues: Troponin C, isotype gamma (150 aa).

N-acetylmethionine is present on M1. 4 EF-hand domains span residues 7 to 42, 43 to 78, 83 to 118, and 119 to 150; these read EQLS…MGVK, ISEK…FLIE, ALKA…LDNR, and LTED…MMSG. 5 residues coordinate Ca(2+): D56, D58, S60, E62, and E67. D132, D134, S136, T138, and E143 together coordinate Ca(2+).

The protein belongs to the troponin C family.

Functionally, troponin is the central regulatory protein of striated muscle contraction. Tn consists of three components: Tn-I which is the inhibitor of actomyosin ATPase, Tn-T which contains the binding site for tropomyosin and Tn-C. The binding of calcium to Tn-C abolishes the inhibitory action of Tn on actin filaments. This Astacus leptodactylus (Turkish narrow-clawed crayfish) protein is Troponin C, isotype gamma.